The primary structure comprises 117 residues: Ig heavy chain V region G4 (117 aa).

The first 19 residues, 1–19 (MTHWLCFTLALVAVRGVLS), serve as a signal peptide directing secretion. The tract at residues 20 to 49 (EIQLVESGGAIRKPGDSLRLSCKASGFTFS) is framework-1. Cys-41 and Cys-115 form a disulfide bridge. The complementarity-determining-1 stretch occupies residues 50-54 (DTWMA). Residues 55-68 (WARQPPGKGLQWVG) are framework-2. The segment at 69 to 85 (EINGNSETIRYAPEVKG) is complementarity-determining-2. The framework-3 stretch occupies residues 86-117 (RLTISRDNTQNLLFLQISSLKPEDTATYYCAR).

The polypeptide is Ig heavy chain V region G4 (G4) (Caiman crocodilus (Spectacled caiman)).